The chain runs to 2297 residues: Serine/threonine-protein kinase WNK2 (2297 aa).

Residues 1–10 (MDGDGGRRDV) are compositionally biased toward basic and acidic residues. Disordered stretches follow at residues 1–75 (MDGD…QRRV) and 89–183 (ARGR…EDDL). Omega-N-methylarginine is present on residues R19 and R30. Residue S45 is modified to Phosphoserine. The segment covering 92–120 (RPAAPAPAALVAQPGAPGAPADAGPEPVG) has biased composition (low complexity). Over residues 142–172 (GPREEAAATVRKEDEGAAEAKPEPGRTRRDE) the composition is skewed to basic and acidic residues. The span at 173–182 (PEEEEDDEDD) shows a compositional bias: acidic residues. The Protein kinase domain maps to 195–453 (LKFDIELGRG…IKDLLSHAFF (259 aa)). ATP-binding positions include S205, 275–278 (TELM), and K325. Residue D342 is the Proton acceptor of the active site. Phosphoserine; by autocatalysis occurs at positions 352 and 356. S560 is subject to Phosphoserine. Disordered regions lie at residues 579-630 (AQAG…DSQS), 699-751 (FPDP…PVVP), 917-1022 (PQMA…PGSQ), 1117-1185 (PVQE…ERAS), 1262-1297 (SEDT…SQAN), 1323-1345 (APEA…ASQG), 1374-1480 (SAQS…HEAP), and 1492-1586 (PCTP…DSTI). The span at 604–625 (PTSATSLASDSTFDSGQGSTVY) shows a compositional bias: polar residues. Pro residues-rich tracts occupy residues 709–740 (VLPP…PTPL) and 939–1007 (PPQP…PLQP). A Phosphoserine modification is found at S1150. Over residues 1167 to 1178 (ARKHHRRSTRAR) the composition is skewed to basic residues. S1262 carries the phosphoserine modification. Polar residues predominate over residues 1392–1406 (SKEQPSFLASQQLLS). The span at 1411–1426 (SNPPGAPPAPLAPSSP) shows a compositional bias: pro residues. Composition is skewed to polar residues over residues 1439–1453 (ATST…TASQ) and 1461–1473 (QGLT…SQPL). The segment covering 1510 to 1520 (EPLPPPAPEPS) has biased composition (pro residues). The span at 1526 to 1544 (PQPALGQPAPLLPAAVGAV) shows a compositional bias: low complexity. A compositionally biased stretch (pro residues) spans 1552–1565 (PSPPLGPTVPPQPP). S1588 is modified (phosphoserine). Residues 1621–1631 (TLEPLRGDQPR) are compositionally biased toward basic and acidic residues. A disordered region spans residues 1621-1865 (TLEPLRGDQP…PVQKQASLPV (245 aa)). The segment covering 1675–1688 (QGTSSSMTAESSPR) has biased composition (polar residues). The residue at position 1685 (S1685) is a Phosphoserine. Over residues 1721–1731 (ARVEPTDRDGG) the composition is skewed to basic and acidic residues. Phosphoserine occurs at positions 1736, 1817, 1818, 1862, and 1889. Disordered regions lie at residues 1970–1990 (NVGF…SKSK) and 2011–2031 (TGHL…QASV). Over residues 1981–1990 (GRRRKTSKSK) the composition is skewed to basic residues. Position 2067 is a phosphoserine (S2067). 2 disordered regions span residues 2123 to 2142 (SRSS…QPAL) and 2269 to 2297 (CCGH…PVRS). A compositionally biased stretch (polar residues) spans 2272-2289 (HSTQPRGGQRVGSKTASF).

The protein belongs to the protein kinase superfamily. Ser/Thr protein kinase family. WNK subfamily. In terms of assembly, forms a complex with the phosphorylated form of STK39. The cofactor is Mg(2+). Post-translationally, autophosphorylated. Autophosphorylation at Ser-352 and Ser-356 promotes its activity. As to expression, expressed in various cancer cell lines (at protein level). Predominantly expressed in heart, brain, skeletal muscle and colon.

The protein resides in the cytoplasm. The protein localises to the cell membrane. The catalysed reaction is L-seryl-[protein] + ATP = O-phospho-L-seryl-[protein] + ADP + H(+). It catalyses the reaction L-threonyl-[protein] + ATP = O-phospho-L-threonyl-[protein] + ADP + H(+). Activation requires autophosphorylation of Ser-356 and, to a lower extent, Ser-352. Its function is as follows. Serine/threonine-protein kinase component of the WNK2-SPAK/OSR1 kinase cascade, which plays an important role in the regulation of electrolyte homeostasis, cell signaling, survival, and proliferation. The WNK2-SPAK/OSR1 kinase cascade is composed of WNK2, which mediates phosphorylation and activation of downstream kinases OXSR1/OSR1 and STK39/SPAK. Following activation, OXSR1/OSR1 and STK39/SPAK catalyze phosphorylation of ion cotransporters, regulating their activity. Acts as an activator and inhibitor of sodium-coupled chloride cotransporters and potassium-coupled chloride cotransporters respectively. Activates SLC12A2, SCNN1A, SCNN1B, SCNN1D and SGK1 and inhibits SLC12A5. Negatively regulates the EGF-induced activation of the ERK/MAPK-pathway and the downstream cell cycle progression. Affects MAPK3/MAPK1 activity by modulating the activity of MAP2K1 and this modulation depends on phosphorylation of MAP2K1 by PAK1. WNK2 acts by interfering with the activity of PAK1 by controlling the balance of the activity of upstream regulators of PAK1 activity, RHOA and RAC1, which display reciprocal activity. In Homo sapiens (Human), this protein is Serine/threonine-protein kinase WNK2.